Here is a 130-residue protein sequence, read N- to C-terminus: uncharacterized protein (130 aa).

Residues Met1–Arg62 form a disordered region. A compositionally biased stretch (pro residues) spans Pro21–Ser30.

This is an uncharacterized protein from Homo sapiens (Human).